We begin with the raw amino-acid sequence, 362 residues long: Alanine racemase (362 aa).

The Proton acceptor; specific for D-alanine role is filled by Lys-35. Position 35 is an N6-(pyridoxal phosphate)lysine (Lys-35). Residue Arg-130 coordinates substrate. Tyr-257 acts as the Proton acceptor; specific for L-alanine in catalysis. Met-305 serves as a coordination point for substrate.

The protein belongs to the alanine racemase family. The cofactor is pyridoxal 5'-phosphate.

It catalyses the reaction L-alanine = D-alanine. Its pathway is amino-acid biosynthesis; D-alanine biosynthesis; D-alanine from L-alanine: step 1/1. Its function is as follows. Catalyzes the interconversion of L-alanine and D-alanine. May also act on other amino acids. In Nitrosomonas europaea (strain ATCC 19718 / CIP 103999 / KCTC 2705 / NBRC 14298), this protein is Alanine racemase (alr).